We begin with the raw amino-acid sequence, 742 residues long: G2/M phase-specific E3 ubiquitin-protein ligase (742 aa).

The C2HC pre-PHD-type zinc finger occupies 10–50; the sequence is SPPCVLCGWTDNCPEKYGEKRTYVEYNLTLHNYCLLMSSGI. The PHD-type 1 zinc finger occupies 78-127; the sequence is LMCNICRKKGASIGCVAPKCKRSYHFPCGLQKECVFQFMEDFRSYCWEHK. The PHD-type 2; degenerate zinc-finger motif lies at 142-192; it reads QCTICLDLVEHLPLYSVLRSPCCKNTWFHRECLQYQALSAGIFFFRCAVCN. Residues 236–285 form a PHD-type 3 zinc finger; it reads RCLCKNGRDYNKPDSKWEIKRCQSCGSRGTHLACSSIKSWEQNWECVECR. Residues 417–742 form the HECT domain; that stretch reads KGFRQRNFRP…IRSTLRGERE (326 aa).

The protein localises to the nucleus. It is found in the nucleolus. It localises to the cytoplasm. The enzyme catalyses S-ubiquitinyl-[E2 ubiquitin-conjugating enzyme]-L-cysteine + [acceptor protein]-L-lysine = [E2 ubiquitin-conjugating enzyme]-L-cysteine + N(6)-ubiquitinyl-[acceptor protein]-L-lysine.. It participates in protein modification; protein ubiquitination. Functionally, E3 ubiquitin-protein ligase which accepts ubiquitin from an E2 ubiquitin-conjugating enzyme in the form of a thioester and then directly transfers the ubiquitin to targeted substrates. Essential in early embryonic development to prevent apoptotic death. This is G2/M phase-specific E3 ubiquitin-protein ligase (G2E3) from Gallus gallus (Chicken).